The chain runs to 358 residues: Methylthioribose-1-phosphate isomerase (358 aa).

Substrate is bound by residues 54–56 (RGA), Arg96, and Gln205. The active-site Proton donor is Asp246. 256–257 (NK) is a binding site for substrate.

Belongs to the eIF-2B alpha/beta/delta subunits family. MtnA subfamily.

It catalyses the reaction 5-(methylsulfanyl)-alpha-D-ribose 1-phosphate = 5-(methylsulfanyl)-D-ribulose 1-phosphate. It functions in the pathway amino-acid biosynthesis; L-methionine biosynthesis via salvage pathway; L-methionine from S-methyl-5-thio-alpha-D-ribose 1-phosphate: step 1/6. In terms of biological role, catalyzes the interconversion of methylthioribose-1-phosphate (MTR-1-P) into methylthioribulose-1-phosphate (MTRu-1-P). The chain is Methylthioribose-1-phosphate isomerase from Pseudomonas aeruginosa (strain UCBPP-PA14).